We begin with the raw amino-acid sequence, 189 residues long: GTPase HRas (189 aa).

10–17 (GAKGVGKS) is a binding site for GTP. The Effector region signature appears at 32-40 (YDPTIEDSY). GTP-binding positions include 57 to 61 (DTAGQ) and 116 to 119 (NKCD). Residues cysteine 181 and cysteine 184 are each lipidated (S-palmitoyl cysteine; by host). At cysteine 186 the chain carries Cysteine methyl ester; by host. The S-farnesyl cysteine; by host moiety is linked to residue cysteine 186. Positions 187–189 (VLS) are cleaved as a propeptide — removed in mature form.

This sequence belongs to the small GTPase superfamily. Ras family.

It localises to the host cell membrane. It catalyses the reaction GTP + H2O = GDP + phosphate + H(+). Alternates between an inactive form bound to GDP and an active form bound to GTP. Activated by a guanine nucleotide-exchange factor (GEF) and inactivated by a GTPase-activating protein (GAP). This Moloney murine sarcoma virus (MoMSV) protein is GTPase HRas (H-RAS).